A 114-amino-acid chain; its full sequence is Fluoride-specific ion channel FluC 2 (114 aa).

The next 4 helical transmembrane spans lie at 3–23, 31–51, 57–77, and 92–112; these read YVIIGGAVGACLRFAVSECWL, LMTAVFVINISGCAMLGWILA, GIELLFISMLGGFTTFSTFCM, and MIYLVISIVGSLFGFLFGWNV. Glycine 67 and threonine 70 together coordinate Na(+).

The protein belongs to the fluoride channel Fluc/FEX (TC 1.A.43) family.

The protein resides in the cell membrane. The catalysed reaction is fluoride(in) = fluoride(out). Na(+) is not transported, but it plays an essential structural role and its presence is essential for fluoride channel function. In terms of biological role, fluoride-specific ion channel. Important for reducing fluoride concentration in the cell, thus reducing its toxicity. This Shouchella clausii (strain KSM-K16) (Alkalihalobacillus clausii) protein is Fluoride-specific ion channel FluC 2.